The chain runs to 258 residues: Isoprenyl transferase 2 (258 aa).

Residues 1–18 (MNFPPIHPSTPKMTPPDL) are compositionally biased toward pro residues. The segment at 1-21 (MNFPPIHPSTPKMTPPDLDPQ) is disordered. Asp32 is a catalytic residue. Position 32 (Asp32) interacts with Mg(2+). Substrate-binding positions include 33-36 (GNGR), Trp37, Arg45, His49, and 77-79 (STE). Asn80 acts as the Proton acceptor in catalysis. Residues Trp81, Arg83, Arg200, and 206–208 (RLS) each bind substrate. Glu219 is a binding site for Mg(2+).

Belongs to the UPP synthase family. Homodimer. Requires Mg(2+) as cofactor.

Its function is as follows. Catalyzes the condensation of isopentenyl diphosphate (IPP) with allylic pyrophosphates generating different type of terpenoids. The sequence is that of Isoprenyl transferase 2 from Nostoc sp. (strain PCC 7120 / SAG 25.82 / UTEX 2576).